Reading from the N-terminus, the 137-residue chain is Basic phospholipase A2 3 (137 aa).

Residues 1-11 (LVAVCVSLLGA) form the signal peptide. A propeptide spanning residues 12–19 (ANIPPQPL) is cleaved from the precursor. Cystine bridges form between Cys-30-Cys-89, Cys-44-Cys-136, Cys-46-Cys-62, Cys-61-Cys-117, Cys-68-Cys-110, Cys-78-Cys-103, and Cys-96-Cys-108. Residues Tyr-45, Gly-47, and Gly-49 each coordinate Ca(2+). His-65 is a catalytic residue. Asp-66 contributes to the Ca(2+) binding site. The active site involves Asp-111.

This sequence belongs to the phospholipase A2 family. Group I subfamily. D49 sub-subfamily. In terms of assembly, monomer, or homotrimer. Was firstly described as a trimer, but has been reinterpreted with the possibility of being a monomer. The cofactor is Ca(2+). As to expression, expressed by the venom gland.

The protein resides in the secreted. It catalyses the reaction a 1,2-diacyl-sn-glycero-3-phosphocholine + H2O = a 1-acyl-sn-glycero-3-phosphocholine + a fatty acid + H(+). Functionally, snake venom phospholipase A2 (PLA2) that shows anticoagulant and neurotoxic activities. PLA2 catalyzes the calcium-dependent hydrolysis of the 2-acyl groups in 3-sn-phosphoglycerides. The protein is Basic phospholipase A2 3 of Bungarus caeruleus (Indian krait).